Consider the following 305-residue polypeptide: UDP-3-O-acyl-N-acetylglucosamine deacetylase (305 aa).

3 residues coordinate Zn(2+): histidine 79, histidine 238, and aspartate 242. Histidine 265 serves as the catalytic Proton donor.

It belongs to the LpxC family. The cofactor is Zn(2+).

It carries out the reaction a UDP-3-O-[(3R)-3-hydroxyacyl]-N-acetyl-alpha-D-glucosamine + H2O = a UDP-3-O-[(3R)-3-hydroxyacyl]-alpha-D-glucosamine + acetate. The protein operates within glycolipid biosynthesis; lipid IV(A) biosynthesis; lipid IV(A) from (3R)-3-hydroxytetradecanoyl-[acyl-carrier-protein] and UDP-N-acetyl-alpha-D-glucosamine: step 2/6. Its function is as follows. Catalyzes the hydrolysis of UDP-3-O-myristoyl-N-acetylglucosamine to form UDP-3-O-myristoylglucosamine and acetate, the committed step in lipid A biosynthesis. The polypeptide is UDP-3-O-acyl-N-acetylglucosamine deacetylase (Salmonella agona (strain SL483)).